The chain runs to 561 residues: Sesquiterpene synthase TPS2 (561 aa).

Residues 6–26 (ANGHSDVPSTQPPIGKQKKEI) are disordered. Positions 277, 314, 318, 455, and 458 each coordinate (2E,6E)-farnesyl diphosphate. Positions 314 and 318 each coordinate Mg(2+). The DDXXD motif motif lies at 314-318 (DDTYD). Mg(2+) contacts are provided by D458, S462, and E466.

Belongs to the terpene synthase family. Tpsa subfamily. As to quaternary structure, monomer. Mg(2+) is required as a cofactor.

It localises to the cytoplasm. The enzyme catalyses (2E,6E)-farnesyl diphosphate = beta-ylangene + diphosphate. It carries out the reaction (2E,6E)-farnesyl diphosphate = beta-copaene + diphosphate. It catalyses the reaction (2E,6E)-farnesyl diphosphate = beta-cubebene + diphosphate. Its pathway is secondary metabolite biosynthesis; terpenoid biosynthesis. In terms of biological role, sesquiterpene synthase involved in the biosynthesis of volatile organic compounds. Mediates the conversion of (2E,6E)-farnesyl diphosphate (FPP) into beta-ylangene, beta-copaene and beta-cubebene. Does not use (2E)-geranyl diphosphate (GPP) as substrate. This Cananga odorata (Ylang-ylang tree) protein is Sesquiterpene synthase TPS2.